The following is a 275-amino-acid chain: Bis(5'-nucleosyl)-tetraphosphatase, symmetrical (275 aa).

Belongs to the Ap4A hydrolase family.

It carries out the reaction P(1),P(4)-bis(5'-adenosyl) tetraphosphate + H2O = 2 ADP + 2 H(+). Hydrolyzes diadenosine 5',5'''-P1,P4-tetraphosphate to yield ADP. The polypeptide is Bis(5'-nucleosyl)-tetraphosphatase, symmetrical (Haemophilus influenzae (strain PittGG)).